A 230-amino-acid polypeptide reads, in one-letter code: Ly6/PLAUR domain-containing protein 8 (230 aa).

A signal peptide spans Met1 to Thr20. N-linked (GlcNAc...) asparagine glycans are attached at residues Asn37, Asn44, Asn74, Asn77, Asn90, Asn106, Asn110, Asn132, Asn137, Asn156, Asn168, Asn181, and Asn197. One can recognise a UPAR/Ly6 domain in the interval Cys125–Ser172. The GPI-anchor amidated serine moiety is linked to residue Ser211. Residues Gln212–Leu230 constitute a propeptide, removed in mature form.

The protein belongs to the CNF-like-inhibitor family. In terms of processing, highly N-glycosylated. Not O-glycosylated. Post-translationally, GPI-anchored. The GPI-anchor is cleaved, leading to secretion into the colonic lumen.

It localises to the cell membrane. It is found in the secreted. In terms of biological role, secreted protein specifically required to prevent invasion of Gram-negative bacteria in the inner mucus layer of the colon epithelium, a portion of the large intestine which is free of commensal microbiota. Prevents invasion of flagellated microbiota by binding to the flagellum of bacteria, such as P.mirabilis, thereby inhibiting bacterial motility in the intestinal lumen. Segregation of intestinal bacteria and epithelial cells in the colon is required to preserve intestinal homeostasis. The chain is Ly6/PLAUR domain-containing protein 8 (LYPD8) from Bos taurus (Bovine).